A 322-amino-acid polypeptide reads, in one-letter code: Short-chain dehydrogenase TIC 32, chloroplastic (322 aa).

NADP(+) is bound by residues 36–42 (GASSGIG), 88–89 (DL), N115, and T136. S170 is a binding site for substrate. The active-site Proton acceptor is Y192. Residues 298 to 314 (DTELAKKVWDFSTKLTD) form an interaction with calmodulin region.

This sequence belongs to the short-chain dehydrogenases/reductases (SDR) family. In terms of assembly, part of the Tic complex. Interacts with TIC110. Expressed in leaves and roots.

Its subcellular location is the plastid. It is found in the chloroplast inner membrane. Its function is as follows. Involved in protein precursor import into chloroplasts. Part of the redox regulon consisting of TIC32, TIC 55 and TIC62. The sequence is that of Short-chain dehydrogenase TIC 32, chloroplastic from Arabidopsis thaliana (Mouse-ear cress).